The sequence spans 339 residues: RNA polymerase II holoenzyme cyclin-like subunit (339 aa).

The interval 48-67 (PNSADSSNGNAANNGGGNGR) is disordered. A compositionally biased stretch (low complexity) spans 49–60 (NSADSSNGNAAN). The 102-residue stretch at 93–194 (RIYCYFLIMK…LIEELQCYLI (102 aa)) folds into the Cyclin N-terminal domain.

It belongs to the cyclin family. Cyclin C subfamily. In terms of assembly, component of the SRB8-11 complex, a regulatory module of the Mediator complex.

The protein localises to the nucleus. In terms of biological role, component of the SRB8-11 complex. The SRB8-11 complex is a regulatory module of the Mediator complex which is itself involved in regulation of basal and activated RNA polymerase II-dependent transcription. The SRB8-11 complex may be involved in the transcriptional repression of a subset of genes regulated by Mediator. It may inhibit the association of the Mediator complex with RNA polymerase II to form the holoenzyme complex. The SRB8-11 complex phosphorylates the C-terminal domain (CTD) of the largest subunit of RNA polymerase II. This Candida glabrata (strain ATCC 2001 / BCRC 20586 / JCM 3761 / NBRC 0622 / NRRL Y-65 / CBS 138) (Yeast) protein is RNA polymerase II holoenzyme cyclin-like subunit (SSN8).